We begin with the raw amino-acid sequence, 108 residues long: Trp operon repressor homolog (108 aa).

A DNA-binding region spans residues 59–82; that stretch reads QRQISQLLGVGVATITRGSNELKS.

The protein belongs to the TrpR family. As to quaternary structure, homodimer.

The protein localises to the cytoplasm. Functionally, this protein is an aporepressor. When complexed with L-tryptophan it binds the operator region of the trp operon and prevents the initiation of transcription. The protein is Trp operon repressor homolog of Aliivibrio fischeri (strain ATCC 700601 / ES114) (Vibrio fischeri).